A 269-amino-acid polypeptide reads, in one-letter code: Shikimate dehydrogenase (NADP(+)) (269 aa).

Shikimate contacts are provided by residues 22–24 (TLS) and T68. Residue K72 is the Proton acceptor of the active site. Residues N93 and D104 each coordinate shikimate. Residues 128–132 (GAGGA), 152–157 (NRTNLR), and F210 contribute to the NADP(+) site. Y212 contacts shikimate. G233 lines the NADP(+) pocket.

This sequence belongs to the shikimate dehydrogenase family. In terms of assembly, homodimer.

It catalyses the reaction shikimate + NADP(+) = 3-dehydroshikimate + NADPH + H(+). Its pathway is metabolic intermediate biosynthesis; chorismate biosynthesis; chorismate from D-erythrose 4-phosphate and phosphoenolpyruvate: step 4/7. Its function is as follows. Involved in the biosynthesis of the chorismate, which leads to the biosynthesis of aromatic amino acids. Catalyzes the reversible NADPH linked reduction of 3-dehydroshikimate (DHSA) to yield shikimate (SA). The polypeptide is Shikimate dehydrogenase (NADP(+)) (Saccharolobus islandicus (strain L.S.2.15 / Lassen #1) (Sulfolobus islandicus)).